A 182-amino-acid chain; its full sequence is Protein GrpE (182 aa).

This sequence belongs to the GrpE family. As to quaternary structure, homodimer.

It localises to the cytoplasm. Functionally, participates actively in the response to hyperosmotic and heat shock by preventing the aggregation of stress-denatured proteins, in association with DnaK and GrpE. It is the nucleotide exchange factor for DnaK and may function as a thermosensor. Unfolded proteins bind initially to DnaJ; upon interaction with the DnaJ-bound protein, DnaK hydrolyzes its bound ATP, resulting in the formation of a stable complex. GrpE releases ADP from DnaK; ATP binding to DnaK triggers the release of the substrate protein, thus completing the reaction cycle. Several rounds of ATP-dependent interactions between DnaJ, DnaK and GrpE are required for fully efficient folding. The chain is Protein GrpE from Aquifex aeolicus (strain VF5).